A 794-amino-acid chain; its full sequence is Phosphoribosylformylglycinamidine synthase subunit PurL (794 aa).

His-47 is a catalytic residue. The ATP site is built by Tyr-50 and Lys-89. Glu-91 provides a ligand contact to Mg(2+). Substrate-binding positions include 92–95 and Arg-114; that span reads SHNH. Residue His-93 is the Proton acceptor of the active site. Asp-115 provides a ligand contact to Mg(2+). Gln-238 provides a ligand contact to substrate. Asp-266 contacts Mg(2+). A substrate-binding site is contributed by 310 to 312; the sequence is ESQ. Residues Asp-522 and Gly-559 each contribute to the ATP site. Asn-560 provides a ligand contact to Mg(2+). Ser-562 contacts substrate.

Belongs to the FGAMS family. Monomer. Part of the FGAM synthase complex composed of 1 PurL, 1 PurQ and 2 PurS subunits.

The protein resides in the cytoplasm. The enzyme catalyses N(2)-formyl-N(1)-(5-phospho-beta-D-ribosyl)glycinamide + L-glutamine + ATP + H2O = 2-formamido-N(1)-(5-O-phospho-beta-D-ribosyl)acetamidine + L-glutamate + ADP + phosphate + H(+). It participates in purine metabolism; IMP biosynthesis via de novo pathway; 5-amino-1-(5-phospho-D-ribosyl)imidazole from N(2)-formyl-N(1)-(5-phospho-D-ribosyl)glycinamide: step 1/2. Its function is as follows. Part of the phosphoribosylformylglycinamidine synthase complex involved in the purines biosynthetic pathway. Catalyzes the ATP-dependent conversion of formylglycinamide ribonucleotide (FGAR) and glutamine to yield formylglycinamidine ribonucleotide (FGAM) and glutamate. The FGAM synthase complex is composed of three subunits. PurQ produces an ammonia molecule by converting glutamine to glutamate. PurL transfers the ammonia molecule to FGAR to form FGAM in an ATP-dependent manner. PurS interacts with PurQ and PurL and is thought to assist in the transfer of the ammonia molecule from PurQ to PurL. In Prochlorococcus marinus (strain MIT 9303), this protein is Phosphoribosylformylglycinamidine synthase subunit PurL.